Here is a 133-residue protein sequence, read N- to C-terminus: ATP synthase epsilon chain (133 aa).

The protein belongs to the ATPase epsilon chain family. As to quaternary structure, F-type ATPases have 2 components, CF(1) - the catalytic core - and CF(0) - the membrane proton channel. CF(1) has five subunits: alpha(3), beta(3), gamma(1), delta(1), epsilon(1). CF(0) has three main subunits: a, b and c.

It localises to the cell membrane. In terms of biological role, produces ATP from ADP in the presence of a proton gradient across the membrane. The protein is ATP synthase epsilon chain of Bacillus mycoides (strain KBAB4) (Bacillus weihenstephanensis).